A 270-amino-acid polypeptide reads, in one-letter code: Diaminopimelate epimerase (270 aa).

Substrate contacts are provided by N15, Q49, and N66. The Proton donor role is filled by C75. Substrate contacts are provided by residues 76 to 77 (GN), N155, N187, and 204 to 205 (ER). C213 (proton acceptor) is an active-site residue. A substrate-binding site is contributed by 214-215 (GS).

Belongs to the diaminopimelate epimerase family. As to quaternary structure, homodimer.

The protein localises to the cytoplasm. It carries out the reaction (2S,6S)-2,6-diaminopimelate = meso-2,6-diaminopimelate. It participates in amino-acid biosynthesis; L-lysine biosynthesis via DAP pathway; DL-2,6-diaminopimelate from LL-2,6-diaminopimelate: step 1/1. Catalyzes the stereoinversion of LL-2,6-diaminopimelate (L,L-DAP) to meso-diaminopimelate (meso-DAP), a precursor of L-lysine and an essential component of the bacterial peptidoglycan. This chain is Diaminopimelate epimerase, found in Rickettsia massiliae (strain Mtu5).